Consider the following 196-residue polypeptide: DnaA initiator-associating protein DiaA (196 aa).

Positions 34–196 constitute an SIS domain; that stretch reads LVHSLLNGNK…DNTLFPHQDD (163 aa).

This sequence belongs to the SIS family. DiaA subfamily. As to quaternary structure, homotetramer; dimer of dimers.

Functionally, required for the timely initiation of chromosomal replication via direct interactions with the DnaA initiator protein. This Salmonella enteritidis PT4 (strain P125109) protein is DnaA initiator-associating protein DiaA.